A 645-amino-acid chain; its full sequence is Rab11 family-interacting protein 1 (645 aa).

Positions 1–128 (MSLAASAGRG…DQGRRKKQWY (128 aa)) constitute a C2 domain. Positions 171-187 (PFGKLKDKIKGKNKDSA) are enriched in basic and acidic residues. A disordered region spans residues 171–215 (PFGKLKDKIKGKNKDSASDTASAIVPSVTPSVDSDDESFSKDKKK). Serine 186, serine 204, serine 208, and serine 236 each carry phosphoserine. Positions 259-296 (WDDDAHEDESSSASDVMSHKRTSSTDQQPNQSNFSLPK) are disordered. A compositionally biased stretch (polar residues) spans 282–293 (STDQQPNQSNFS). Serine 301, serine 316, serine 340, serine 342, serine 344, serine 346, serine 357, serine 358, and serine 383 each carry phosphoserine. Residues 330–545 (PEARSEIRES…PRPHPVKPMN (216 aa)) are disordered. Composition is skewed to basic and acidic residues over residues 378–391 (SDRRLSDSSTKDSM) and 418–432 (AARETKDSKKQESKK). Serine 434 is modified (phosphoserine). Over residues 459 to 487 (SEKEKERKGALVEAQLREEDLMRRPEKDA) the composition is skewed to basic and acidic residues. The 63-residue stretch at 573-635 (KKYQPSDPAF…EETPNILRVP (63 aa)) folds into the FIP-RBD domain. The tract at residues 581 to 645 (AFAYAQLTHD…AQMGKKAGKM (65 aa)) is necessary for interaction with RAB4A and RAB11A, subcellular location and endosomal recycling.

Homooligomer. Interacts with RAB11A, RAB11B, RAB25, RAB4A and RAB14.

Its subcellular location is the recycling endosome. The protein resides in the cytoplasmic vesicle. Functionally, a Rab11 effector protein involved in the endosomal recycling process. Also involved in controlling membrane trafficking along the phagocytic pathway and in phagocytosis. Interaction with RAB14 may function in the process of neurite formation. The polypeptide is Rab11 family-interacting protein 1 (Rab11fip1) (Mus musculus (Mouse)).